A 333-amino-acid polypeptide reads, in one-letter code: Anthranilate phosphoribosyltransferase (333 aa).

Residues Gly-81, 84-85, Thr-89, 91-94, 109-117, and Ala-121 contribute to the 5-phospho-alpha-D-ribose 1-diphosphate site; these read GD, NIST, and KHGNRSVSS. Anthranilate is bound at residue Gly-81. Ser-93 is a binding site for Mg(2+). Residue Asn-112 coordinates anthranilate. Arg-167 is an anthranilate binding site. Asp-225 and Glu-226 together coordinate Mg(2+).

Belongs to the anthranilate phosphoribosyltransferase family. Homodimer. It depends on Mg(2+) as a cofactor.

It catalyses the reaction N-(5-phospho-beta-D-ribosyl)anthranilate + diphosphate = 5-phospho-alpha-D-ribose 1-diphosphate + anthranilate. The protein operates within amino-acid biosynthesis; L-tryptophan biosynthesis; L-tryptophan from chorismate: step 2/5. In terms of biological role, catalyzes the transfer of the phosphoribosyl group of 5-phosphorylribose-1-pyrophosphate (PRPP) to anthranilate to yield N-(5'-phosphoribosyl)-anthranilate (PRA). This chain is Anthranilate phosphoribosyltransferase, found in Haemophilus influenzae (strain 86-028NP).